A 977-amino-acid chain; its full sequence is MSFYKEKSINETNLGSFVDESNELFFSALSESSMNHGTPDDSILLDLVSRSDNKDLYQDSLDVRDNFSNLSSDEIPQSSSYEQTRKPFFHHFNPFEFLEATSPLQQNGKSRDTEKPPSMKEKDLSSNSSSQHDKAFHERVDQGKNKSSTTKYQEFRTVADYREFSPGQSVNSLKPNSGDEVPSTKSSTSSEMHTQLLKDEQKKILTPAPDVPHDVYCIEPSLGRVFSFPASFVASPLLLEDCNKIASCDLPYSTFYANSQVIDKFSEYFAYVDQDPCHIRVLNANTDQSLILYTQSDVKNLHFGKNKHTKPHLLVMDALSNLYVWKILQKRSEISVSLLFTIRRANYGICDWIPNSSNMFSMIVKNSLYIVDISNIRSNNISPKVYAKDFNGLQAAKVDLPGPINSYTISSDRSVVAILVNSQIFFYSFPVSNLFSTNPSHRGNWAAIATMSLQLPSTANSISFLSSPPNNNDIIDKVICVSYANNTILGLFDFGLCAFTQEIEFSNEKEKSPIQQLLTFNNSNMIVAKRNQLLDIFIYSPSDLSNVGVLSNTAALISAVSKGKRFGDSGYINKVISNEVVDHSIVFVTLIGCDSSKLELILALSSGYFQFCIESDSKFDEGTSLEYPNSDKRILARASLTSGLKSNNTLRALSQDLKNCAKSKDDSTTQNLTESLGSVCYPSMPFFNQYVPQNPNEVRENISSVMKSRIHAKFESLHSRVELVVKNSYMKLLEQTISEAATDEISDLFKLIHSKPFLLEVGFLETGFLANDLENLTSTYRSSNRQLCDFSNRIGNINQKLEKLLMIERLETSDQSPTSSSNFEESESFAVSKKVLELVRISKNKEALICFTKDPSIEAFRSLQDVPDYSLDDCSSIHLLAFIHVLSKLIIKEEQLSFSRLQLLSRATSRLRTMTLSVFNNSGTLTPELFSSVVRIVLKNVREFVLIGNSSIQKSKHEFLITTLQALLREVDIFLNT.

The tract at residues 100–152 is disordered; the sequence is ATSPLQQNGKSRDTEKPPSMKEKDLSSNSSSQHDKAFHERVDQGKNKSSTTKY. Composition is skewed to basic and acidic residues over residues 109 to 124 and 131 to 144; these read KSRD…EKDL and QHDK…DQGK. S165 carries the phosphoserine modification. Composition is skewed to polar residues over residues 166 to 175 and 183 to 193; these read PGQSVNSLKP and STKSSTSSEMH. The segment at 166–194 is disordered; the sequence is PGQSVNSLKPNSGDEVPSTKSSTSSEMHT.

This is an uncharacterized protein from Schizosaccharomyces pombe (strain 972 / ATCC 24843) (Fission yeast).